The primary structure comprises 217 residues: D-methionine transport system permease protein MetI (217 aa).

Residues 13-204 (VWETLMMTFV…LLVILVYLIQ (192 aa)) enclose the ABC transmembrane type-1 domain. A run of 5 helical transmembrane segments spans residues 20-40 (TFVSGFFGFVLGLPVGVLLYV), 58-78 (GVVNIFRSIPFIILLVWMIPF), 81-101 (MIVGTSIGLQAAIVPLTVGAA), 152-172 (ITLITLVGYSAMGGAVGAGGL), and 186-206 (ATVMNTVLVLLVILVYLIQLS).

Belongs to the binding-protein-dependent transport system permease family. CysTW subfamily.

The protein resides in the cell inner membrane. Part of the binding-protein-dependent transport system for D-methionine and the toxic methionine analog alpha-methyl-methionine. Probably responsible for the translocation of the substrate across the membrane. The protein is D-methionine transport system permease protein MetI (metI) of Yersinia pestis.